A 274-amino-acid polypeptide reads, in one-letter code: Diaminopimelate epimerase (274 aa).

Asn-11, Gln-44, and Asn-64 together coordinate substrate. Catalysis depends on Cys-73, which acts as the Proton donor. Substrate-binding positions include Gly-74–Asn-75, Asn-157, Asn-190, and Glu-208–Arg-209. The active-site Proton acceptor is the Cys-217. Gly-218–Ser-219 provides a ligand contact to substrate.

Belongs to the diaminopimelate epimerase family. In terms of assembly, homodimer.

Its subcellular location is the cytoplasm. The enzyme catalyses (2S,6S)-2,6-diaminopimelate = meso-2,6-diaminopimelate. It functions in the pathway amino-acid biosynthesis; L-lysine biosynthesis via DAP pathway; DL-2,6-diaminopimelate from LL-2,6-diaminopimelate: step 1/1. Catalyzes the stereoinversion of LL-2,6-diaminopimelate (L,L-DAP) to meso-diaminopimelate (meso-DAP), a precursor of L-lysine and an essential component of the bacterial peptidoglycan. The protein is Diaminopimelate epimerase of Pectobacterium atrosepticum (strain SCRI 1043 / ATCC BAA-672) (Erwinia carotovora subsp. atroseptica).